Here is a 256-residue protein sequence, read N- to C-terminus: Small ribosomal subunit protein uS2 (256 aa).

Belongs to the universal ribosomal protein uS2 family.

The sequence is that of Small ribosomal subunit protein uS2 from Methylococcus capsulatus (strain ATCC 33009 / NCIMB 11132 / Bath).